The primary structure comprises 345 residues: uncharacterized protein (345 aa).

Disordered stretches follow at residues 1 to 58 (MPSP…WRGD) and 139 to 165 (KTNS…NSPK). Basic and acidic residues predominate over residues 27 to 39 (IKGEGSDDGKEKS). The span at 154-165 (KQGSAESKNSPK) shows a compositional bias: polar residues.

The protein belongs to the MG307/MG309/MG338 family.

This is an uncharacterized protein from Mycoplasma pneumoniae (strain ATCC 29342 / M129 / Subtype 1) (Mycoplasmoides pneumoniae).